The sequence spans 804 residues: Probable basic-leucine zipper transcription factor C (804 aa).

Disordered regions lie at residues 86–148 (FISP…NDIN) and 275–371 (YGNV…PKKR). The segment covering 90-145 (NNNNNNNNNNNNNNNNNNNNNNNNNNNNNNNNNNNNNNNNNNNNNNNNNNNNNNNN) has biased composition (low complexity). A compositionally biased stretch (polar residues) spans 275-291 (YGNVSDNSSPETNFSYA). The segment covering 292-334 (SPSSPSSTQSQSSPYEQQPLSPNPTISLSSSISVTATTTTRPN) has biased composition (low complexity). Residues 335–356 (ATEKTKESSLKSKSKSNEKDKE) show a composition bias toward basic and acidic residues. The 64-residue stretch at 415-478 (ALNYQFRKIK…DQYKLQEKQK (64 aa)) folds into the bZIP domain. The tract at residues 421–436 (RKIKNRESARRSRERK) is basic motif. The segment at 443-450 (LEAKIAEI) is leucine-zipper. The segment at 670-693 (KNCNNNNENNNNNDNNKNSDDEKG) is disordered. Residues 672–685 (CNNNNENNNNNDNN) show a composition bias toward low complexity.

The protein belongs to the bZIP family.

The protein localises to the nucleus. Its function is as follows. Probable transcriptional regulator. The polypeptide is Probable basic-leucine zipper transcription factor C (bzpC) (Dictyostelium discoideum (Social amoeba)).